Reading from the N-terminus, the 23-residue chain is Dahlein-4.3 (23 aa).

Expressed by the skin dorsal glands.

It localises to the secreted. Functionally, has no antimicrobial activity. The protein is Dahlein-4.3 of Ranoidea dahlii (Dahl's aquatic frog).